Here is a 188-residue protein sequence, read N- to C-terminus: Protein Cripto (188 aa).

Residues Met-1–Gly-30 form the signal peptide. The 30-residue stretch at Leu-78–Glu-107 folds into the EGF-like domain. An N-linked (GlcNAc...) asparagine glycan is attached at Asn-79. 6 cysteine pairs are disulfide-bonded: Cys-82/Cys-89, Cys-83/Cys-95, Cys-97/Cys-106, Cys-115/Cys-133, Cys-128/Cys-149, and Cys-131/Cys-140. Asp-150 carries GPI-anchor amidated aspartate lipidation. Residues Gly-151–Tyr-188 constitute a propeptide, removed in mature form.

It belongs to the EGF-CFC (Cripto-1/FRL1/Cryptic) family. Interacts with the activin type-1 receptor ACVR1B. The GPI-anchor is attached to the protein in the endoplasmic reticulum and serves to target the protein to the cell surface. There, it is processed by GPI processing phospholipase A2 (TMEM8A), removing an acyl-chain at the sn-2 position of GPI and releasing CRIPTO as a lysophosphatidylinositol-bearing form, which is further cleaved by phospholipase D (GPLD1) into a soluble form. Preferentially expressed in gastric and colorectal carcinomas than in their normal counterparts. Expressed in breast and lung.

It is found in the cell membrane. Its subcellular location is the secreted. In terms of biological role, GPI-anchored cell membrane protein involved in Nodal signaling. Cell-associated CRIPTO acts as a Nodal coreceptor in cis. Shedding of CRIPTO by TMEM8A modulates Nodal signaling by allowing soluble CRIPTO to act as a Nodal coreceptor on other cells. Could play a role in the determination of the epiblastic cells that subsequently give rise to the mesoderm. The sequence is that of Protein Cripto from Homo sapiens (Human).